We begin with the raw amino-acid sequence, 492 residues long: GlcNAc-binding protein A (492 aa).

An N-terminal signal peptide occupies residues 1–23 (MNKSSTKTLIALSMMAVSSGVSA). Positions 24–204 (HGYVSETNDG…AFYNVIDVKF (181 aa)) constitute a Chitin-binding type-4 domain. Residues 443–484 (AGTKVLAEDSNVYQCKEFPYSGYCVQWTETATNFAPGVGSDW) form the Chitin-binding type-3 domain.

Belongs to the GbpA family.

It is found in the secreted. In terms of biological role, probably interacts with GlcNAc residues. May promote attachment to both epithelial cell surfaces and chitin. The sequence is that of GlcNAc-binding protein A from Aliivibrio fischeri (strain MJ11) (Vibrio fischeri).